The chain runs to 274 residues: 2,3,4,5-tetrahydropyridine-2,6-dicarboxylate N-succinyltransferase (274 aa).

Substrate contacts are provided by R105 and D142.

Belongs to the transferase hexapeptide repeat family. In terms of assembly, homotrimer.

The protein localises to the cytoplasm. It catalyses the reaction (S)-2,3,4,5-tetrahydrodipicolinate + succinyl-CoA + H2O = (S)-2-succinylamino-6-oxoheptanedioate + CoA. The protein operates within amino-acid biosynthesis; L-lysine biosynthesis via DAP pathway; LL-2,6-diaminopimelate from (S)-tetrahydrodipicolinate (succinylase route): step 1/3. The chain is 2,3,4,5-tetrahydropyridine-2,6-dicarboxylate N-succinyltransferase from Methylobacillus flagellatus (strain ATCC 51484 / DSM 6875 / VKM B-1610 / KT).